A 182-amino-acid chain; its full sequence is ATP-dependent protease subunit HslV (182 aa).

T2 is a catalytic residue. Residues G157, C160, and T163 each contribute to the Na(+) site.

It belongs to the peptidase T1B family. HslV subfamily. In terms of assembly, a double ring-shaped homohexamer of HslV is capped on each side by a ring-shaped HslU homohexamer. The assembly of the HslU/HslV complex is dependent on binding of ATP.

It is found in the cytoplasm. The enzyme catalyses ATP-dependent cleavage of peptide bonds with broad specificity.. Its activity is regulated as follows. Allosterically activated by HslU binding. Functionally, protease subunit of a proteasome-like degradation complex believed to be a general protein degrading machinery. The protein is ATP-dependent protease subunit HslV of Sodalis glossinidius (strain morsitans).